The primary structure comprises 563 residues: Beta-catenin-like protein 1 (563 aa).

Methionine 1 is subject to N-acetylmethionine. The tract at residues 1–81 (MDVGELLSYQ…EEEEPLDESS (81 aa)) is disordered. The Nuclear localization signal motif lies at 16-33 (KRPRDDEEEELKTRRKQT). Basic and acidic residues predominate over residues 34-45 (GPRERGRYREDE). The span at 66–78 (DGEEEEEEEEPLD) shows a compositional bias: acidic residues. 2 HEAT repeats span residues 79-129 (ESSV…VVAT) and 134-176 (YHLL…TLHE). Lysine 91 is modified (N6-acetyllysine). Positions 130–140 (MPDLYHLLVEL) match the Nuclear export signal (NES) motif. ARM repeat units follow at residues 178–228 (EEGA…MAEF), 229–273 (RPEM…LQDN), 274–323 (DENR…CLML), 325–363 (SNRE…AMIG), and 364–417 (PEGA…LLRN). Residue serine 389 is modified to Phosphoserine. The stretch at 476–540 (DMEDEFYLRR…HIIKEYAENI (65 aa)) forms a coiled coil. A Phosphoserine modification is found at serine 545.

Component of the PRP19-CDC5L splicing complex composed of a core complex comprising a homotetramer of PRPF19, CDC5L, PLRG1 and BCAS2, and at least three less stably associated proteins CTNNBL1, CWC15 and HSPA8. Interacts directly with CWC15 and CDC5L in the complex. Interacts with AICDA; the interaction is important for the antibody diversification activity of AICDA. Interacts with PRPF31 (via its NLS). Interacts (via its N-terminal NLS) with KPNA1 and KPNA2.

Its subcellular location is the nucleus. In terms of biological role, component of the PRP19-CDC5L complex that forms an integral part of the spliceosome and is required for activating pre-mRNA splicing. Participates in AID/AICDA-mediated somatic hypermutation (SHM) and class-switch recombination (CSR), 2 processes resulting in the production of high-affinity, mutated isotype-switched antibodies. The chain is Beta-catenin-like protein 1 (Ctnnbl1) from Rattus norvegicus (Rat).